A 231-amino-acid polypeptide reads, in one-letter code: MAKKGKKYLDAASKVDRNEHYSVEDAISLAKETSVANFDATVEVAFRLVIDTRKNDQQIRGAVVLPHGTGKTQRVLVFAKGDKASEAEAAGADYVGESEYATKIQQGWFDFDVVVATPDMMGEVGKLGRVLGPKGLMPNPKTGTVTMDVKKAVEEIKAGKVEYRAEKAGIIHASIGKVSFSTEDLVENFNTLQDVIAKAKPASAKGTYFKSVAVTTTMGPGVKVDTSNFKL.

This sequence belongs to the universal ribosomal protein uL1 family. Part of the 50S ribosomal subunit.

Functionally, binds directly to 23S rRNA. The L1 stalk is quite mobile in the ribosome, and is involved in E site tRNA release. In terms of biological role, protein L1 is also a translational repressor protein, it controls the translation of the L11 operon by binding to its mRNA. The chain is Large ribosomal subunit protein uL1 from Staphylococcus carnosus (strain TM300).